Reading from the N-terminus, the 285-residue chain is Type II restriction enzyme Cfr10I (285 aa).

Residues aspartate 134 and glutamate 204 each contribute to the Mg(2+) site.

In terms of assembly, homodimer. It depends on Mg(2+) as a cofactor.

The enzyme catalyses Endonucleolytic cleavage of DNA to give specific double-stranded fragments with terminal 5'-phosphates.. An F and P subtype restriction enzyme that recognizes the double-stranded sequence 5'-RCCGGY-3' and cleaves after R-1. This chain is Type II restriction enzyme Cfr10I (cfr10IR), found in Citrobacter freundii.